Consider the following 271-residue polypeptide: Hachiman protein HamA (271 aa).

Its function is as follows. Component of antiviral defense system Hachiman, composed of HamA and HamB. Expression of Hachiman in B.subtilis (strain BEST7003) confers resistance to phages phi105, phi29, phi3T, rho14, SBSphiJ, SpBeta and SPR. This Bacillus cereus protein is Hachiman protein HamA.